A 277-amino-acid chain; its full sequence is Diaminopimelate epimerase (277 aa).

Substrate-binding residues include Asn-13, Gln-46, and Asn-66. Cys-75 acts as the Proton donor in catalysis. Residues 76 to 77 (GN), Asn-160, Asn-193, and 211 to 212 (ER) contribute to the substrate site. The active-site Proton acceptor is Cys-220. 221 to 222 (GS) is a binding site for substrate.

Belongs to the diaminopimelate epimerase family. As to quaternary structure, homodimer.

Its subcellular location is the cytoplasm. The enzyme catalyses (2S,6S)-2,6-diaminopimelate = meso-2,6-diaminopimelate. The protein operates within amino-acid biosynthesis; L-lysine biosynthesis via DAP pathway; DL-2,6-diaminopimelate from LL-2,6-diaminopimelate: step 1/1. In terms of biological role, catalyzes the stereoinversion of LL-2,6-diaminopimelate (L,L-DAP) to meso-diaminopimelate (meso-DAP), a precursor of L-lysine and an essential component of the bacterial peptidoglycan. The sequence is that of Diaminopimelate epimerase from Legionella pneumophila (strain Paris).